The following is a 174-amino-acid chain: Ribosome maturation factor RimM (174 aa).

Residues 96 to 169 (EPDTYYDHQL…ILEIDPPDGL (74 aa)) form the PRC barrel domain.

It belongs to the RimM family. In terms of assembly, binds ribosomal protein uS19.

The protein localises to the cytoplasm. Its function is as follows. An accessory protein needed during the final step in the assembly of 30S ribosomal subunit, possibly for assembly of the head region. Essential for efficient processing of 16S rRNA. May be needed both before and after RbfA during the maturation of 16S rRNA. It has affinity for free ribosomal 30S subunits but not for 70S ribosomes. The protein is Ribosome maturation factor RimM of Mycobacterium marinum (strain ATCC BAA-535 / M).